A 296-amino-acid chain; its full sequence is Fructose-bisphosphate aldolase class 1 (296 aa).

The active-site Proton acceptor is glutamate 175. Residue lysine 212 is the Schiff-base intermediate with dihydroxyacetone-P of the active site.

The protein belongs to the class I fructose-bisphosphate aldolase family.

The enzyme catalyses beta-D-fructose 1,6-bisphosphate = D-glyceraldehyde 3-phosphate + dihydroxyacetone phosphate. It participates in carbohydrate degradation; glycolysis; D-glyceraldehyde 3-phosphate and glycerone phosphate from D-glucose: step 4/4. The polypeptide is Fructose-bisphosphate aldolase class 1 (Staphylococcus haemolyticus (strain JCSC1435)).